The following is a 139-amino-acid chain: uncharacterized protein (139 aa).

The region spanning 19–73 is the HTH cro/C1-type domain; the sequence is IRLRRTMLGMSQEKLGESLGITFQQIQKYEKGTNRVGASRLQNISQILNVPVSFF. A DNA-binding region (H-T-H motif) is located at residues 30 to 49; that stretch reads QEKLGESLGITFQQIQKYEK.

This is an uncharacterized protein from Rhizobium meliloti (strain 1021) (Ensifer meliloti).